Reading from the N-terminus, the 111-residue chain is Large ribosomal subunit protein uL22 (111 aa).

The protein belongs to the universal ribosomal protein uL22 family. In terms of assembly, part of the 50S ribosomal subunit.

Functionally, this protein binds specifically to 23S rRNA; its binding is stimulated by other ribosomal proteins, e.g. L4, L17, and L20. It is important during the early stages of 50S assembly. It makes multiple contacts with different domains of the 23S rRNA in the assembled 50S subunit and ribosome. In terms of biological role, the globular domain of the protein is located near the polypeptide exit tunnel on the outside of the subunit, while an extended beta-hairpin is found that lines the wall of the exit tunnel in the center of the 70S ribosome. The protein is Large ribosomal subunit protein uL22 of Chlamydia trachomatis serovar A (strain ATCC VR-571B / DSM 19440 / HAR-13).